A 768-amino-acid chain; its full sequence is Ral guanine nucleotide dissociation stimulator-like 1 (768 aa).

Residues 65–196 enclose the N-terminal Ras-GEF domain; that stretch reads KIRTIKAGTL…RAQNLLEQFQ (132 aa). Residues 232–501 form the Ras-GEF domain; the sequence is SEDLVAEQLT…YALSCEIEAA (270 aa). Ser520 bears the Phosphoserine mark. Residues 530-623 form a disordered region; sequence PGSTPTKEQP…PPTCNNNPKI (94 aa). Composition is skewed to low complexity over residues 541 to 561 and 586 to 596; these read SAAS…SCES and ESSSSCSSIHS. Residues 597–621 are compositionally biased toward polar residues; the sequence is MDTNSSGMSSLINPLSSPPTCNNNP. The Ras-associating domain occupies 648–735; the sequence is DTCIIRISVE…FDFILRKKNS (88 aa).

In terms of assembly, interacts with Ras.

Functionally, probable guanine nucleotide exchange factor. This is Ral guanine nucleotide dissociation stimulator-like 1 (Rgl1) from Mus musculus (Mouse).